The sequence spans 408 residues: MVKVNENYLKLKAGYLFPEISKRVNNYTQANSSSKVIKLGIGDVTEPLPKACVKAMGEALNEMGTNNGFKGYGPEQGYGWLREKISVNDFISRGCQISSEEIFVSDGSKCDSSNILDILGSDNLIAVTDPVYPVYVDTNVMTGRTGETLQNGTYQGLVYLAINEENKFQPEIPKKKVDIVYLCFPNNPTGATITKQELKKWVDYAIENKSLILFDAAYEAFIQDKNIPHSIYEIEGAKNCAIEFRSFSKNAGFTGVRCAYTVIPKNLSGQNSKGDKIDLWSLWNRRQCTKFNGVSYIVQRGAEAVYSSQGKKEVNSLIDFYMKNAEIMQNKLRSAGFKVYGGDNAPYVWIKVPDRMTSWDFFDYLLEKADVVGTPGSGFGLAGEGYFRLSAFNSRMNVNNAMERIINI.

Residues Tyr-15 and Gly-42 each coordinate substrate. Pyridoxal 5'-phosphate-binding positions include Tyr-72, 108 to 109 (SK), Tyr-132, Asn-187, Tyr-218, and 246 to 248 (SFS). Substrate contacts are provided by Lys-109, Tyr-132, and Asn-187. Position 249 is an N6-(pyridoxal phosphate)lysine (Lys-249). 2 residues coordinate pyridoxal 5'-phosphate: Arg-257 and Asn-292. Substrate is bound by residues Asn-292 and Arg-388.

The protein belongs to the class-I pyridoxal-phosphate-dependent aminotransferase family. LL-diaminopimelate aminotransferase subfamily. Homodimer. Requires pyridoxal 5'-phosphate as cofactor.

The catalysed reaction is (2S,6S)-2,6-diaminopimelate + 2-oxoglutarate = (S)-2,3,4,5-tetrahydrodipicolinate + L-glutamate + H2O + H(+). The protein operates within amino-acid biosynthesis; L-lysine biosynthesis via DAP pathway; LL-2,6-diaminopimelate from (S)-tetrahydrodipicolinate (aminotransferase route): step 1/1. In terms of biological role, involved in the synthesis of meso-diaminopimelate (m-DAP or DL-DAP), required for both lysine and peptidoglycan biosynthesis. Catalyzes the direct conversion of tetrahydrodipicolinate to LL-diaminopimelate. This is LL-diaminopimelate aminotransferase from Prochlorococcus marinus subsp. pastoris (strain CCMP1986 / NIES-2087 / MED4).